Consider the following 326-residue polypeptide: MYGIGNTTILTILISIILLNYILKTITNTMDYIIFRFLLLIALISPFVRTPNYGMYLPITGSLDAVYTNSTSGESFLTSTLCLYYPTEAKNEISDDEWENTLSQLFLTKGWPTGSVYFKDYNDITTFSMNPQLYCDYNVVLMRYDNTSELDASELADLILNEWLCNPMDISLHYYQQSSESNKWISMGTDCTVKVCPLNTQTLGIGCKTTDVNTFEIVASSEKLVITDVVNGVNHKINISMSTCTIRNCNKLGPRENVAIIQVGGPNALDITADPTTVPQVQRIMRINWKKWWQVFYTVVDYINQIIQVMSKRSRSLDTAAFYYRI.

The first 50 residues, 1 to 50 (MYGIGNTTILTILISIILLNYILKTITNTMDYIIFRFLLLIALISPFVRT), serve as a signal peptide directing secretion. Asn-69 carries an N-linked (GlcNAc...) asparagine; by host glycan. The cysteines at positions 82 and 135 are disulfide-linked. A Ca(2+)-binding site is contributed by Asp-95. Asn-146 is a glycosylation site (N-linked (GlcNAc...) asparagine; by host). Residues 165–167 (CNP) form a CNP motif; interaction with ITGAV/ITGB3 region. Intrachain disulfides connect Cys-165–Cys-249, Cys-191–Cys-244, and Cys-196–Cys-207. Gln-177, Gly-206, Thr-214, Glu-216, Asp-228, and Val-229 together coordinate Ca(2+). Asn-238 carries N-linked (GlcNAc...) asparagine; by host glycosylation. The interval 253 to 255 (GPR) is GPR motif; interaction with ITGAX/ITGB2. Asp-301 is a Ca(2+) binding site.

The protein belongs to the rotavirus VP7 family. Homotrimer; disulfide-linked. 2 Ca(2+) ions bound at each subunit interface in the trimer hold the trimer together. Interacts with the intermediate capsid protein VP6. Interacts with the outer capsid protein VP5*. In terms of processing, N-glycosylated. Post-translationally, the N-terminus is blocked possibly by pyroglutamic acid.

It localises to the virion. The protein resides in the host endoplasmic reticulum lumen. Functionally, calcium-binding protein that interacts with rotavirus cell receptors once the initial attachment by VP4 has been achieved. Rotavirus attachment and entry into the host cell probably involves multiple sequential contacts between the outer capsid proteins VP4 and VP7, and the cell receptors. Following entry into the host cell, low intracellular or intravesicular Ca(2+) concentration probably causes the calcium-stabilized VP7 trimers to dissociate from the virion. This step is probably necessary for the membrane-disrupting entry step and the release of VP4, which is locked onto the virion by VP7. The protein is Outer capsid glycoprotein VP7 of Rotavirus A (strain RVA/Human/Japan/KUN/1980/G2P1B[4]) (RV-A).